Here is a 447-residue protein sequence, read N- to C-terminus: Probable 7-dehydrocholesterol reductase (447 aa).

The next 8 membrane-spanning stretches (helical) occupy residues 24 to 44 (LTTA…YLIT), 71 to 91 (IPSF…FQLI), 102 to 124 (FVPH…LVYY), 133 to 153 (IITH…PTII), 157 to 177 (WGSI…LAYF), 244 to 264 (YVSN…VDFF), 281 to 301 (FGWM…TLQA), and 309 to 329 (IDLS…GYII). NADP(+) contacts are provided by residues Lys-337, Arg-341, Ile-367, Trp-372, and 379 to 380 (NY). Residues 393–413 (ACGFSHFIPYFYCVYMTILLV) form a helical membrane-spanning segment. Residues Asp-419, 423–427 (CSRKY), and Tyr-434 contribute to the NADP(+) site.

Belongs to the ERG4/ERG24 family.

It is found in the membrane. It carries out the reaction cholesterol + NADP(+) = 7-dehydrocholesterol + NADPH + H(+). It functions in the pathway steroid biosynthesis; cholesterol biosynthesis. Functionally, catalyzes the last step of the cholesterol synthesis pathway, which transforms cholesta-5,7-dien-3beta-ol (7-dehydrocholesterol,7-DHC) into cholesterol by reducing the C7-C8 double bond of its sterol core. This is Probable 7-dehydrocholesterol reductase (DHCR7) from Acanthamoeba polyphaga (Amoeba).